We begin with the raw amino-acid sequence, 92 residues long: Cell division protein FtsL (92 aa).

Residues 1-3 are Cytoplasmic-facing; sequence MGR. Residues 4–21 form a helical membrane-spanning segment; that stretch reads ISLIVAALLMLSAISLVT. At 22–92 the chain is on the periplasmic side; the sequence is SRYQSRQLFI…YMNQPAGGAQ (71 aa).

It belongs to the FtsL family. In terms of assembly, part of a complex composed of FtsB, FtsL and FtsQ.

It is found in the cell inner membrane. Essential cell division protein. May link together the upstream cell division proteins, which are predominantly cytoplasmic, with the downstream cell division proteins, which are predominantly periplasmic. The protein is Cell division protein FtsL of Bordetella pertussis (strain Tohama I / ATCC BAA-589 / NCTC 13251).